Reading from the N-terminus, the 519-residue chain is MDALCASMKGTAQLVAICNQESAFWGEKISGRRLINKGFGVRSCKSFTTQQRGRNVTPAVLTRDINKEMLPFEESMFEEQPTADPKAVASVILGGGVGTRLFPLTSRRAKPAVPIGGCYRLIDVPMSNCINSGIRKIFILTQFNSFSLNRHLATYNFGNGVGFGDGFVEVLAGTQTPGDGRKMWFQAADAVREFIWVFENQKNKNVEHIIILSGDHLYRMNYMDFVQKHIDTNADITVSCVPMDDGRASDFGLMKIDETGAIIQFAEKPKGPALKAMQVDTSILGLSEQEASNFPYIASMGVYVFKTDVLLNLLKSAYPSCNDFGSEIIPSAVKDHNVQAYLFNDYWEDIGTVKSFFDANLALTKQPPKFDFNDPKTPFYTSARFLPPTKVDKSRIVDAIISHGCFLRECNIQHSIVGVRSRLDYGVEFKDTMMMGADYYQTECEIASLLAEGKVPIGVGPNTKIQNCIIDKNAKIGKDVVILNKEGVEEADRSAEGFYIRSGITVIMKNATIKDGTVI.

The protein belongs to the bacterial/plant glucose-1-phosphate adenylyltransferase family. As to quaternary structure, heterotetramer. As to expression, leaves and tubers.

The protein resides in the plastid. It localises to the chloroplast. It is found in the amyloplast. The enzyme catalyses alpha-D-glucose 1-phosphate + ATP + H(+) = ADP-alpha-D-glucose + diphosphate. It functions in the pathway glycan biosynthesis; starch biosynthesis. Activated by 3'phosphoglycerate, inhibited by orthophosphate. Allosteric regulation. Its function is as follows. This protein plays a role in synthesis of starch. It catalyzes the synthesis of the activated glycosyl donor, ADP-glucose from Glc-1-P and ATP. This is Glucose-1-phosphate adenylyltransferase large subunit 2, chloroplastic/amyloplastic (AGPS2) from Solanum tuberosum (Potato).